The following is a 611-amino-acid chain: Guanylate-binding protein 6 (611 aa).

The segment at 1–308 is GTPase domain (Globular); sequence MTQPQMAPIC…NAINSGAVPC (308 aa). Positions 33 to 275 constitute a GB1/RHD3-type G domain; that stretch reads SQPVVVVAIV…FVSYIFTYAK (243 aa). Residues 43 to 50, 65 to 67, and 95 to 99 each bind GTP; these read GLYRTGKS, LGS, and DTEGL.

This sequence belongs to the TRAFAC class dynamin-like GTPase superfamily. GB1/RHD3 GTPase family. GB1 subfamily.

The protein localises to the cytoplasmic vesicle. It carries out the reaction GTP + H2O = GDP + phosphate + H(+). Functionally, interferon (IFN)-inducible GTPase that plays important roles in innate immunity against a diverse range of bacterial, viral and protozoan pathogens, such as bacterial pathogens Listeria monocytogenes and Mycobacterium bovis BCG as well as the protozoan pathogen Toxoplasma gondii. Confers protection to several pathogens, including the bacterial pathogens Listeria monocytogenes and Mycobacterium bovis BCG as well as the protozoan pathogen Toxoplasma gondii. This is Guanylate-binding protein 6 (Gbp6) from Mus musculus (Mouse).